Consider the following 802-residue polypeptide: Ribosomal protein S6 kinase alpha-5 (802 aa).

Residues 1-22 (MEEEGGSSGGAAGTSADGGDGG) are compositionally biased toward gly residues. Residues 1–23 (MEEEGGSSGGAAGTSADGGDGGE) are disordered. In terms of domain architecture, Protein kinase 1 spans 49–318 (FELLKVLGTG…ADEIKEHLFF (270 aa)). ATP-binding positions include 55–63 (LGTGAYGKV) and K81. D177 (proton acceptor) is an active-site residue. Phosphoserine; by autocatalysis is present on S212. The AGC-kinase C-terminal domain maps to 319 to 387 (QKINWDDLAA…VAPSILFKRN (69 aa)). Residue S360 is modified to Phosphoserine; by MAPK1, MAPK3 and MAPK14. S376 and S381 each carry phosphoserine; by autocatalysis. The region spanning 426 to 687 (DLKDKPLGEG…MSGLRYNEWL (262 aa)) is the Protein kinase 2 domain. Residues 432-440 (LGEGSFSIC) and K455 each bind ATP. D544 (proton acceptor) is an active-site residue. Residue T581 is modified to Phosphothreonine; by MAPK1, MAPK3 and MAPK14. S647, S657, S691, and S695 each carry phosphoserine. Position 700 is a phosphothreonine; by MAPK1, MAPK3 and MAPK14 (T700). Positions 741-802 (AKRRKMKKTS…TLFQFSDSVA (62 aa)) are disordered. A compositionally biased stretch (low complexity) spans 749–779 (TSTSTETRSSSSESSHSSSSHSHGKTTPTKT). Phosphoserine; by autocatalysis occurs at positions 750, 752, and 758. Over residues 780–802 (LQPSNPADSNNPETLFQFSDSVA) the composition is skewed to polar residues. The residue at position 798 (S798) is a Phosphoserine.

This sequence belongs to the protein kinase superfamily. AGC Ser/Thr protein kinase family. S6 kinase subfamily. As to quaternary structure, forms a complex with either MAPK1/ERK2 or MAPK3/ERK1 in quiescent cells which transiently dissociates following mitogenic stimulation. Also associates with MAPK14/p38-alpha. Activated RPS6KA5 associates with and phosphorylates the NF-kappa-B p65 subunit RELA. Interacts with CREBBP and EP300. Requires Mg(2+) as cofactor. Post-translationally, ser-376 and Thr-581 phosphorylation is required for kinase activity. Ser-376 and Ser-212 are autophosphorylated by the C-terminal kinase domain, and their phosphorylation is essential for the catalytic activity of the N-terminal kinase domain. Phosphorylated at Ser-360, Thr-581 and Thr-700 by MAPK1/ERK2, MAPK3/ERK1 and MAPK14/p38-alpha. Autophosphorylated at Ser-750, Ser-752 and Ser-758 by the N-terminal kinase domain. Ubiquitinated.

Its subcellular location is the nucleus. It carries out the reaction L-seryl-[protein] + ATP = O-phospho-L-seryl-[protein] + ADP + H(+). The catalysed reaction is L-threonyl-[protein] + ATP = O-phospho-L-threonyl-[protein] + ADP + H(+). Activated by phosphorylation at Ser-360, Thr-581 and Thr-700 by MAPK1/ERK2, MAPK3/ERK1 and MAPK14/p38-alpha, and by further autophosphorylation of Ser-212, Ser-376 and Ser-381 by the activated C-terminal kinase domain. The active N-terminal kinase domain finally phosphorylates downstream substrates, as well as Ser-750, Ser-752 and Ser-758 in its own C-terminal region. Functionally, serine/threonine-protein kinase that is required for the mitogen or stress-induced phosphorylation of the transcription factors CREB1 and ATF1 and for the regulation of the transcription factors RELA, STAT3 and ETV1/ER81, and that contributes to gene activation by histone phosphorylation and functions in the regulation of inflammatory genes. Phosphorylates CREB1 and ATF1 in response to mitogenic or stress stimuli such as UV-C irradiation, epidermal growth factor (EGF) and anisomycin. Plays an essential role in the control of RELA transcriptional activity in response to TNF and upon glucocorticoid, associates in the cytoplasm with the glucocorticoid receptor NR3C1 and contributes to RELA inhibition and repression of inflammatory gene expression. In skeletal myoblasts is required for phosphorylation of RELA at 'Ser-276' during oxidative stress. In erythropoietin-stimulated cells, is necessary for the 'Ser-727' phosphorylation of STAT3 and regulation of its transcriptional potential. Phosphorylates ETV1/ER81 at 'Ser-191' and 'Ser-216', and thereby regulates its ability to stimulate transcription, which may be important during development and breast tumor formation. Directly represses transcription via phosphorylation of 'Ser-1' of histone H2A. Phosphorylates 'Ser-10' of histone H3 in response to mitogenics, stress stimuli and EGF, which results in the transcriptional activation of several immediate early genes, including proto-oncogenes c-fos/FOS and c-jun/JUN. May also phosphorylate 'Ser-28' of histone H3. Mediates the mitogen- and stress-induced phosphorylation of high mobility group protein 1 (HMGN1/HMG14). In lipopolysaccharide-stimulated primary macrophages, acts downstream of the Toll-like receptor TLR4 to limit the production of pro-inflammatory cytokines. Functions probably by inducing transcription of the MAP kinase phosphatase DUSP1 and the anti-inflammatory cytokine interleukin 10 (IL10), via CREB1 and ATF1 transcription factors. Plays a role in neuronal cell death by mediating the downstream effects of excitotoxic injury. Phosphorylates TRIM7 at 'Ser-107' in response to growth factor signaling via the MEK/ERK pathway, thereby stimulating its ubiquitin ligase activity. The protein is Ribosomal protein S6 kinase alpha-5 (RPS6KA5) of Pongo abelii (Sumatran orangutan).